Consider the following 788-residue polypeptide: Xylulose-5-phosphate phosphoketolase (788 aa).

This sequence belongs to the XFP family. Homohexamer. Thiamine diphosphate is required as a cofactor.

It catalyses the reaction D-xylulose 5-phosphate + phosphate = acetyl phosphate + D-glyceraldehyde 3-phosphate + H2O. This is Xylulose-5-phosphate phosphoketolase (xpkA) from Lactiplantibacillus pentosus (Lactobacillus pentosus).